A 527-amino-acid chain; its full sequence is Catalase (527 aa).

The segment covering methionine 1–glutamine 22 has biased composition (basic and acidic residues). Residues methionine 1–leucine 42 are disordered. Residue alanine 2 is modified to Blocked amino end (Ala); alternate. Alanine 2 is modified (N-acetylalanine; alternate). The residue at position 9 (serine 9) is a Phosphoserine. N6-succinyllysine is present on lysine 13. Active-site residues include histidine 75 and asparagine 148. 6 residues coordinate NADP(+): histidine 194, phenylalanine 198, serine 201, arginine 203, asparagine 213, and tyrosine 215. Lysine 221 is subject to N6-succinyllysine. Position 233 is an N6-acetyllysine (lysine 233). Lysine 237, tryptophan 303, and histidine 305 together coordinate NADP(+). Tyrosine 358 serves as a coordination point for heme. Phosphoserine is present on residues serine 417 and serine 434. NADP(+)-binding residues include glutamine 442, threonine 445, and phenylalanine 446. An N6-acetyllysine; alternate mark is found at lysine 449 and lysine 480. An N6-succinyllysine; alternate mark is found at lysine 449 and lysine 480. Lysine 499 is subject to N6-acetyllysine. Threonine 511 is modified (phosphothreonine). Serine 517 bears the Phosphoserine mark. Positions lysine 524–leucine 527 match the Microbody targeting signal; atypical motif.

The protein belongs to the catalase family. Homotetramer. Interacts (via microbody targeting signal) with PEX5, monomeric form interacts with PEX5, leading to its translocation into peroxisomes. Heme is required as a cofactor. It depends on NADP(+) as a cofactor.

Its subcellular location is the peroxisome matrix. It catalyses the reaction 2 H2O2 = O2 + 2 H2O. In terms of biological role, catalyzes the degradation of hydrogen peroxide (H(2)O(2)) generated by peroxisomal oxidases to water and oxygen, thereby protecting cells from the toxic effects of hydrogen peroxide. Promotes growth of cells including T-cells, B-cells, myeloid leukemia cells, melanoma cells, mastocytoma cells and normal and transformed fibroblast cells. This is Catalase (CAT) from Bos taurus (Bovine).